We begin with the raw amino-acid sequence, 369 residues long: MTSKKFDFTEYSHRRYNPLTDSYVLCSPHRAKRPWQGAKEEIKKDDTVKYDPTCYLCPGNIRATGFENPKYETTYVFPNDYPAVRVDQPDYMQDESEITKGNTLKTRMFKTEGVKGKCFVICFCPNHNLTLPLMSAEAICNVVETWKHLYVTLKKESLEGPIRYKYLQIFENKGSAMGCSNPHPHGQAWCLDVIPSVVAQEMCNMTKYFELNNSHLLGDYVKLEMLEKERIVVENDSFIVVVPYWALWPFETLLIAKEHLKSLEEFEEKQKVDLASALKMLTTKYDNLFNTSFPYSMGLHQAPLYGSNEEVENSWFHMHFYPPLLRSATVKKFCVGFEMLGEPQRDLTSEQAAARLQELDGQKHYKNLL.

Zn(2+) is bound by residues Cys-54 and Cys-57. UDP-alpha-D-glucose is bound by residues Ala-63 and 79-80 (ND). His-127 provides a ligand contact to Zn(2+). Asn-172 serves as a coordination point for UDP-alpha-D-glucose. His-183 provides a ligand contact to Zn(2+). His-185 acts as the Tele-UMP-histidine intermediate in catalysis. Gln-187 lines the UDP-alpha-D-glucose pocket. Residues Glu-201, His-300, His-317, and His-319 each contribute to the Fe cation site. Residues 332 to 335 (KFCV) and 337 to 338 (FE) contribute to the UDP-alpha-D-glucose site.

Belongs to the galactose-1-phosphate uridylyltransferase type 1 family. In terms of assembly, homodimer. The cofactor is Zn(2+).

It catalyses the reaction alpha-D-galactose 1-phosphate + UDP-alpha-D-glucose = alpha-D-glucose 1-phosphate + UDP-alpha-D-galactose. Its pathway is carbohydrate metabolism; galactose metabolism. The sequence is that of Galactose-1-phosphate uridylyltransferase (gal7) from Schizosaccharomyces pombe (strain 972 / ATCC 24843) (Fission yeast).